Consider the following 585-residue polypeptide: Probable ubiquitin carboxyl-terminal hydrolase 9 (585 aa).

The interval 1–23 (MSLLRWMGMNSPGSTDRRKSTWE) is disordered. The region spanning 41–424 (YGLTNYGNTC…TAYVLFYTAA (384 aa)) is the USP domain. Cys50 functions as the Nucleophile in the catalytic mechanism. Residues 85 to 110 (CTKTNHPESSSSRHSKKKSMENRKSS) are disordered. Residue His375 is the Proton acceptor of the active site. Polar residues predominate over residues 447-470 (SQLKQESVEVSNLSSTPRSNSTIT). A disordered region spans residues 447 to 473 (SQLKQESVEVSNLSSTPRSNSTITYPD). Position 505 is a phosphoserine (Ser505). 2 disordered regions span residues 511-530 (FHSRSVDASPKAVRRESRSF) and 540-585 (KFFG…RSKR). Residues 542 to 551 (FGSSQSNSPK) show a composition bias toward polar residues. Ser549 is modified (phosphoserine). Over residues 553-570 (SPLRDTHKSSDEHSESKH) the composition is skewed to basic and acidic residues. Over residues 574-585 (LPWQFSRSRSKR) the composition is skewed to polar residues.

Belongs to the peptidase C19 family. Interacts with bun107 and bun62.

Its subcellular location is the nucleus. It is found in the cytoplasm. The protein resides in the cell tip. The catalysed reaction is Thiol-dependent hydrolysis of ester, thioester, amide, peptide and isopeptide bonds formed by the C-terminal Gly of ubiquitin (a 76-residue protein attached to proteins as an intracellular targeting signal).. Its function is as follows. Ubiquitin C-terminal hydrolase involved in regulating actin dynamics and/or endocytosis at cell tips and septa. The chain is Probable ubiquitin carboxyl-terminal hydrolase 9 (ubp9) from Schizosaccharomyces pombe (strain 972 / ATCC 24843) (Fission yeast).